The primary structure comprises 465 residues: Branched-chain amino acid permease BcaP (465 aa).

The next 13 membrane-spanning stretches (helical) occupy residues 35-55 (LLGI…TGAV), 57-77 (AGPG…FAAL), 103-123 (LMAF…VSAV), 133-153 (SFLS…PGAV), 159-179 (LFNL…YLGI), 188-208 (IMVI…AVYV), 216-236 (FMPM…FAFI), 258-278 (GIIF…AIMT), 305-325 (VAGI…LVML), 355-375 (PYVA…LVPL), 380-400 (KLVN…VIVL), 413-432 (CPGV…FLIL), and 437-456 (VTIV…YFLY).

Belongs to the amino acid-polyamine-organocation (APC) superfamily.

The protein resides in the cell membrane. Its activity is regulated as follows. Isoleucine uptake is efficiently reduced in the presence of 100-fold excess valine, leucine, alanine, threonine, serine, cysteine, asparagine, and a nonproteinaceous amino acid 4-azaleucine. Branched-chain amino acid transport system which is involved in the uptake of isoleucine, valine and probably leucine. Can also transport threonine, and is active as a minor serine permease. May be an amino acid permease of rather broad specificity, because several amino acids, albeit at 100-fold excess, are able to prevent isoleucine uptake. Probably does not transport methionine. Together with BraB and BrnQ, plays an important role in the activation of CodY, a branched-chain amino acid-responsive transcriptional regulator that controls the expression of several dozen transcription units in B.subtilis. In Bacillus subtilis (strain 168), this protein is Branched-chain amino acid permease BcaP.